A 309-amino-acid chain; its full sequence is GTP cyclohydrolase MptA (309 aa).

It belongs to the GTP cyclohydrolase IV family. Homodimer. It depends on Fe(2+) as a cofactor.

It carries out the reaction GTP + H2O = 7,8-dihydroneopterin 2',3'-cyclic phosphate + formate + diphosphate + H(+). The protein operates within cofactor biosynthesis; 5,6,7,8-tetrahydromethanopterin biosynthesis. Its function is as follows. Converts GTP to 7,8-dihydro-D-neopterin 2',3'-cyclic phosphate, the first intermediate in the biosynthesis of coenzyme methanopterin. The chain is GTP cyclohydrolase MptA from Haloquadratum walsbyi (strain DSM 16790 / HBSQ001).